The chain runs to 195 residues: Interferon tau-11 (195 aa).

Positions M1–G23 are cleaved as a signal peptide. 2 disulfides stabilise this stretch: C24–C122 and C52–C162. N101 is a glycosylation site (N-linked (GlcNAc...) asparagine).

Belongs to the alpha/beta interferon family. IFN-alphaII subfamily. Constitutively and exclusively expressed in the mononuclear cells of the extraembryonic trophectoderm.

The protein localises to the secreted. Functionally, paracrine hormone primarily responsible for maternal recognition of pregnancy. Interacts with endometrial receptors, probably type I interferon receptors, and blocks estrogen receptor expression, preventing the estrogen-induced increase in oxytocin receptor expression in the endometrium. This results in the suppression of the pulsatile endometrial release of the luteolytic hormone prostaglandin F2-alpha, hindering the regression of the corpus luteum (luteolysis) and therefore a return to ovarian cyclicity. This, and a possible direct effect of IFN-tau on prostaglandin synthesis, leads in turn to continued ovarian progesterone secretion, which stimulates the secretion by the endometrium of the nutrients required for the growth of the conceptus. In summary, displays particularly high antiviral and antiproliferative potency concurrently with particular weak cytotoxicity, high antiluteolytic activity and immunomodulatory properties. In contrast with other IFNs, IFN-tau is not virally inducible. In Ovis aries (Sheep), this protein is Interferon tau-11 (IFNT11).